Consider the following 521-residue polypeptide: 2-isopropylmalate synthase (521 aa).

The 263-residue stretch at 12–274 folds into the Pyruvate carboxyltransferase domain; sequence VIIFDTTLRD…WNKIDTTMLT (263 aa). Residues D21, H209, H211, and N245 each coordinate Mn(2+). The regulatory domain stretch occupies residues 398 to 521; sequence KLVSLTVIAG…DMAAPAAAAS (124 aa).

It belongs to the alpha-IPM synthase/homocitrate synthase family. LeuA type 1 subfamily. In terms of assembly, homodimer. The cofactor is Mn(2+).

It is found in the cytoplasm. The enzyme catalyses 3-methyl-2-oxobutanoate + acetyl-CoA + H2O = (2S)-2-isopropylmalate + CoA + H(+). The protein operates within amino-acid biosynthesis; L-leucine biosynthesis; L-leucine from 3-methyl-2-oxobutanoate: step 1/4. In terms of biological role, catalyzes the condensation of the acetyl group of acetyl-CoA with 3-methyl-2-oxobutanoate (2-ketoisovalerate) to form 3-carboxy-3-hydroxy-4-methylpentanoate (2-isopropylmalate). This Rhodopseudomonas palustris (strain BisA53) protein is 2-isopropylmalate synthase.